Reading from the N-terminus, the 229-residue chain is Guanylate kinase (229 aa).

In terms of domain architecture, RPE1 insert spans 7–42 (RVLQKCAYREEFKGDMERSTAATSKLPLEVELSRNS). Residues 44-222 (GLIIILSSPS…TLKKIHAIIV (179 aa)) enclose the Guanylate kinase-like domain. 51-58 (SPSGTGKS) is an ATP binding site.

The protein belongs to the guanylate kinase family.

It localises to the cytoplasm. The enzyme catalyses GMP + ATP = GDP + ADP. In terms of biological role, essential for recycling GMP and indirectly, cGMP. The polypeptide is Guanylate kinase (gmk) (Rickettsia conorii (strain ATCC VR-613 / Malish 7)).